The chain runs to 100 residues: Apolipoprotein C-II (100 aa).

A signal peptide spans 1-22 (MGSRFLLALFLVLLVLGCEVQA). Residues 66-74 (SVDEKLRDM) form a lipid binding region. Residues 78 to 100 (SSAAMTTYASIFTDQILTLLKGE) are lipoprotein lipase cofactor.

This sequence belongs to the apolipoprotein C2 family. In terms of processing, proapolipoprotein C-II is synthesized as a sialic acid containing glycoprotein which is subsequently desialylated prior to its proteolytic processing. Proapolipoprotein C-II, the major form found in plasma undergoes proteolytic cleavage of its N-terminal hexapeptide to generate the mature form apolipoprotein C-II, which occurs as the minor form in plasma.

Its subcellular location is the secreted. Component of chylomicrons, very low-density lipoproteins (VLDL), low-density lipoproteins (LDL), and high-density lipoproteins (HDL) in plasma. Plays an important role in lipoprotein metabolism as an activator of lipoprotein lipase. The polypeptide is Apolipoprotein C-II (APOC2) (Ellobius talpinus (Northern mole vole)).